We begin with the raw amino-acid sequence, 176 residues long: Peptide deformylase 1 (176 aa).

Positions 99 and 141 each coordinate Fe cation. Glu-142 is an active-site residue. His-145 contributes to the Fe cation binding site.

It belongs to the polypeptide deformylase family. Fe(2+) serves as cofactor.

It catalyses the reaction N-terminal N-formyl-L-methionyl-[peptide] + H2O = N-terminal L-methionyl-[peptide] + formate. Its function is as follows. Removes the formyl group from the N-terminal Met of newly synthesized proteins. Requires at least a dipeptide for an efficient rate of reaction. N-terminal L-methionine is a prerequisite for activity but the enzyme has broad specificity at other positions. The protein is Peptide deformylase 1 of Nitrosomonas europaea (strain ATCC 19718 / CIP 103999 / KCTC 2705 / NBRC 14298).